The primary structure comprises 255 residues: Zinc import ATP-binding protein ZnuC (255 aa).

An ABC transporter domain is found at 5-220; that stretch reads VALEHIAVAF…PDFIAMFGYR (216 aa).

It belongs to the ABC transporter superfamily. Zinc importer (TC 3.A.1.15.5) family. In terms of assembly, the complex is composed of two ATP-binding proteins (ZnuC), two transmembrane proteins (ZnuB) and a solute-binding protein (ZnuA).

Its subcellular location is the cell inner membrane. It carries out the reaction Zn(2+)(out) + ATP(in) + H2O(in) = Zn(2+)(in) + ADP(in) + phosphate(in) + H(+)(in). Its function is as follows. Part of the ABC transporter complex ZnuABC involved in zinc import. Responsible for energy coupling to the transport system. The chain is Zinc import ATP-binding protein ZnuC from Sodalis glossinidius (strain morsitans).